Consider the following 156-residue polypeptide: ATP synthase subunit b (156 aa).

Residues Leu-7 to Leu-29 traverse the membrane as a helical segment.

This sequence belongs to the ATPase B chain family. As to quaternary structure, F-type ATPases have 2 components, F(1) - the catalytic core - and F(0) - the membrane proton channel. F(1) has five subunits: alpha(3), beta(3), gamma(1), delta(1), epsilon(1). F(0) has three main subunits: a(1), b(2) and c(10-14). The alpha and beta chains form an alternating ring which encloses part of the gamma chain. F(1) is attached to F(0) by a central stalk formed by the gamma and epsilon chains, while a peripheral stalk is formed by the delta and b chains.

It localises to the cell inner membrane. Functionally, f(1)F(0) ATP synthase produces ATP from ADP in the presence of a proton or sodium gradient. F-type ATPases consist of two structural domains, F(1) containing the extramembraneous catalytic core and F(0) containing the membrane proton channel, linked together by a central stalk and a peripheral stalk. During catalysis, ATP synthesis in the catalytic domain of F(1) is coupled via a rotary mechanism of the central stalk subunits to proton translocation. Component of the F(0) channel, it forms part of the peripheral stalk, linking F(1) to F(0). The protein is ATP synthase subunit b of Burkholderia multivorans (strain ATCC 17616 / 249).